A 404-amino-acid chain; its full sequence is Probable homogentisate phytyltransferase 1, chloroplastic (404 aa).

The N-terminal 77 residues, 1-77 (MDSLRLRPSL…SHHRIPHRPT (77 aa)), are a transit peptide targeting the chloroplast. A disordered region spans residues 68 to 96 (SHHRIPHRPTSSSADASGQPLQSSAEAHD). A compositionally biased stretch (polar residues) spans 76 to 92 (PTSSSADASGQPLQSSA). Transmembrane regions (helical) follow at residues 119–139 (TVIGTALSIVSVSLLAVENLS), 144–164 (LFLTGLLEAVVAALFMNIYIV), 184–204 (LASGEYSPATGVALVSAFAAM), 216–238 (PLFLALFISFILGTAYSINLPFL), 245–265 (VVAALCILAVRAVIVQLAFFL), 282–302 (LIFATAFMTFFSVVIALFKDI), 325–345 (VFWICVGLLEMAYCVAILMGA), 348–368 (ACLWSKYATVVGHAILAAILW), and 382–402 (ITSFYMFIWKLFYAEYLLIPL).

Belongs to the UbiA prenyltransferase family.

It is found in the plastid. The protein localises to the chloroplast thylakoid membrane. It catalyses the reaction phytyl diphosphate + homogentisate + H(+) = 2-methyl-6-phytyl-1,4-benzene-1,4-diol + CO2 + diphosphate. The protein operates within cofactor biosynthesis; tocopherol biosynthesis. Involved in the synthesis of tocopherol (vitamin E). Catalyzes the condensation of homogentisate and phytyl diphosphate to form dimethylphytylhydroquinone. In Oryza sativa subsp. japonica (Rice), this protein is Probable homogentisate phytyltransferase 1, chloroplastic (HPT1).